We begin with the raw amino-acid sequence, 228 residues long: Ribosomal RNA small subunit methyltransferase G (228 aa).

S-adenosyl-L-methionine is bound by residues G89, L94, 140-141, and R159; that span reads VE.

It belongs to the methyltransferase superfamily. RNA methyltransferase RsmG family.

The protein localises to the cytoplasm. It carries out the reaction guanosine(527) in 16S rRNA + S-adenosyl-L-methionine = N(7)-methylguanosine(527) in 16S rRNA + S-adenosyl-L-homocysteine. Its function is as follows. Specifically methylates the N7 position of guanine in position 527 of 16S rRNA. In Burkholderia multivorans (strain ATCC 17616 / 249), this protein is Ribosomal RNA small subunit methyltransferase G.